The sequence spans 414 residues: Esterase FrsA (414 aa).

This sequence belongs to the FrsA family.

It carries out the reaction a carboxylic ester + H2O = an alcohol + a carboxylate + H(+). Functionally, catalyzes the hydrolysis of esters. The protein is Esterase FrsA of Salmonella dublin (strain CT_02021853).